The sequence spans 642 residues: Myrosinase-binding protein 2 (642 aa).

4 Jacalin-type lectin domains span residues 2-151 (SEKV…HFFA), 156-291 (LKHF…HFAP), 334-477 (PNKV…YFAP), and 490-633 (SKKL…HAVP). Positions 296–334 (TPAPAPAPAPAPAPAPSPAPASAPVPAPAPTPAPAPAPP) are enriched in pro residues. Disordered stretches follow at residues 296–338 (TPAP…NKVE) and 479–499 (TNST…RGGN). Residues 479–490 (TNSTTPSTPSTS) show a composition bias toward low complexity.

It belongs to the jacalin lectin family. Expressed in flowers. Detected mainly in ovules and styles of immature flowers, but also in pistils, styles, stamens, petals and embryos. Not detected in leaves.

The sequence is that of Myrosinase-binding protein 2 (F-ATMBP) from Arabidopsis thaliana (Mouse-ear cress).